The primary structure comprises 880 residues: Probable potassium channel AKT5 (880 aa).

Residues 1–82 (MGIEKRKKMV…PFDPRYRAWD (82 aa)) lie on the Cytoplasmic side of the membrane. A helical membrane pass occupies residues 83 to 103 (WFLVILVLYTAWASPFEFGFL). Residues 104–111 (QTPRAPLS) lie on the Extracellular side of the membrane. The chain crosses the membrane as a helical span at residues 112–132 (ILDNVVNGFFAVDIVLTFFVA). Over 133–153 (FLDKATYLLVDDPKRIAWRYT) the chain is Cytoplasmic. The chain crosses the membrane as a helical span at residues 154 to 174 (STWLIFDVVSTVPYELFGSLL). The Extracellular portion of the chain corresponds to 175–182 (HNTIQGYG). A helical; Voltage-sensor transmembrane segment spans residues 183–203 (IFSMLRLWRLHRVSKCFARLE). At 204 to 217 (KDRKYNYFWIRCTK) the chain is on the cytoplasmic side. Residues 218–238 (LLLVSLFVVHCGACFCYSIAA) traverse the membrane as a helical segment. Over 239 to 265 (HYPDPSMTFMALAEANWKQKSLLIRYV) the chain is Extracellular. The segment at residues 266–285 (TAMYWSITTFSTTGYGDIHG) is an intramembrane region (pore-forming). Over 286-291 (NNAEER) the chain is Extracellular. A helical membrane pass occupies residues 292-312 (AFILFYMIFNLGLLAYIIGNM). Over 313–880 (TNLVVHVTSR…GDFLLLLKVS (568 aa)) the chain is Cytoplasmic. An a nucleoside 3',5'-cyclic phosphate-binding site is contributed by 396 to 517 (LFHGISNDLL…IMNNLLQHLK (122 aa)). ANK repeat units lie at residues 541-570 (DLPL…NPNE), 574-603 (NGRT…DPNI), 607-636 (EGSV…TLSF), 637-667 (DTVG…DISL), and 671-700 (NGTT…DMDK). The 72-residue stretch at 809-880 (VGGVYPARVT…GDFLLLLKVS (72 aa)) folds into the KHA domain.

The protein belongs to the potassium channel family. Plant (TC 1.A.1.4) subfamily. As to quaternary structure, the potassium channel is probably composed of a homo- or heterotetrameric complex of pore-forming subunits. Predominantly expressed in flowers.

The protein localises to the membrane. Its function is as follows. Probable potassium channel. May interact with the cytoskeleton or with regulatory proteins. The protein is Probable potassium channel AKT5 (AKT5) of Arabidopsis thaliana (Mouse-ear cress).